The chain runs to 569 residues: Pyrophosphate--fructose 6-phosphate 1-phosphotransferase subunit beta 2 (569 aa).

Glycine 107 is a diphosphate binding site. Aspartate 201 contacts Mg(2+). Substrate contacts are provided by residues 229–231 (TID), 268–269 (KY), 276–278 (MGR), glutamate 337, and 442–445 (YEGR). The active-site Proton acceptor is the aspartate 231.

It belongs to the phosphofructokinase type A (PFKA) family. PPi-dependent PFK group II subfamily. Clade 'Long' sub-subfamily. In terms of assembly, tetramer of two alpha (regulatory) and two beta (catalytic) chains. The cofactor is Mg(2+).

The protein localises to the cytoplasm. The enzyme catalyses beta-D-fructose 6-phosphate + diphosphate = beta-D-fructose 1,6-bisphosphate + phosphate + H(+). The protein operates within carbohydrate degradation; glycolysis; D-glyceraldehyde 3-phosphate and glycerone phosphate from D-glucose: step 3/4. With respect to regulation, allosterically activated by fructose 2,6-bisphosphate. Its function is as follows. Catalytic subunit of pyrophosphate--fructose 6-phosphate 1-phosphotransferase. Catalyzes the phosphorylation of D-fructose 6-phosphate, the first committing step of glycolysis. Uses inorganic phosphate (PPi) as phosphoryl donor instead of ATP like common ATP-dependent phosphofructokinases (ATP-PFKs), which renders the reaction reversible, and can thus function both in glycolysis and gluconeogenesis. The sequence is that of Pyrophosphate--fructose 6-phosphate 1-phosphotransferase subunit beta 2 from Arabidopsis thaliana (Mouse-ear cress).